A 122-amino-acid polypeptide reads, in one-letter code: Cytochrome c-556 (122 aa).

Residues Met11, Cys111, Cys114, and His115 each contribute to the heme site. The heme c site is built by Met11, Cys111, Cys114, and His115.

Monomer. Binds 1 heme c group covalently per subunit.

Functionally, low-spin monoheme cytochrome c. The polypeptide is Cytochrome c-556 (Agrobacterium tumefaciens (strain II Chrys)).